Consider the following 548-residue polypeptide: Ankyrin repeat domain-containing protein SOWAHA (548 aa).

The first 19 residues, 1-19, serve as a signal peptide directing secretion; sequence MALAAAAAAAAAAAGVSQA. The tract at residues 114–212 is disordered; the sequence is EDNCAPGAPH…PPTAQVPPQK (99 aa). Residues 136–153 show a composition bias toward polar residues; the sequence is SAPSELQHTPETLPSEVT. The segment covering 198–212 has biased composition (pro residues); it reads GPEPAPPTAQVPPQK. Position 258 is a phosphoserine (Ser258). ANK repeat units follow at residues 344-373 and 383-413; these read SGFT…RGGA and GGYT…QVHV. The tract at residues 512–548 is disordered; sequence PRKKTKIRGGLPSFTEISHRSTPGPLAGLVPSLPPPT.

It belongs to the SOWAH family.

This Mus musculus (Mouse) protein is Ankyrin repeat domain-containing protein SOWAHA (Sowaha).